Reading from the N-terminus, the 239-residue chain is Uridylate kinase (239 aa).

Residue 12–15 (KLSG) coordinates ATP. Positions 20-25 (GDQGYG) are involved in allosteric activation by GTP. Glycine 54 contributes to the UMP binding site. ATP-binding residues include glycine 55 and arginine 59. Residues aspartate 74 and 135–142 (TGNPYFTT) each bind UMP. 3 residues coordinate ATP: threonine 162, tyrosine 168, and aspartate 171.

The protein belongs to the UMP kinase family. Homohexamer.

It is found in the cytoplasm. The enzyme catalyses UMP + ATP = UDP + ADP. It functions in the pathway pyrimidine metabolism; CTP biosynthesis via de novo pathway; UDP from UMP (UMPK route): step 1/1. Its activity is regulated as follows. Allosterically activated by GTP. Inhibited by UTP. Functionally, catalyzes the reversible phosphorylation of UMP to UDP. This Geobacter metallireducens (strain ATCC 53774 / DSM 7210 / GS-15) protein is Uridylate kinase.